The sequence spans 552 residues: FERRY endosomal RAB5 effector complex subunit 3 (552 aa).

Ser-79 carries the phosphoserine modification.

In terms of assembly, component of the FERRY complex composed of five subunits, TBCK, PPP1R21, FERRY3, CRYZL1 and GATD1 with a ratio of 1:2:1:2:4, respectively.

It is found in the cytoplasm. The protein resides in the early endosome. Functionally, component of the FERRY complex (Five-subunit Endosomal Rab5 and RNA/ribosome intermediary). The FERRY complex directly interacts with mRNAs and RAB5A, and functions as a RAB5A effector involved in the localization and the distribution of specific mRNAs most likely by mediating their endosomal transport. The complex recruits mRNAs and ribosomes to early endosomes through direct mRNA-interaction. Plays a role in mast cell degranulation. This chain is FERRY endosomal RAB5 effector complex subunit 3, found in Rattus norvegicus (Rat).